We begin with the raw amino-acid sequence, 156 residues long: Cyclic pyranopterin monophosphate synthase (156 aa).

Substrate is bound by residues 73–75 (LCH) and 110–111 (ME). Residue D125 is part of the active site.

Belongs to the MoaC family. As to quaternary structure, homohexamer; trimer of dimers.

It carries out the reaction (8S)-3',8-cyclo-7,8-dihydroguanosine 5'-triphosphate = cyclic pyranopterin phosphate + diphosphate. It functions in the pathway cofactor biosynthesis; molybdopterin biosynthesis. In terms of biological role, catalyzes the conversion of (8S)-3',8-cyclo-7,8-dihydroguanosine 5'-triphosphate to cyclic pyranopterin monophosphate (cPMP). The chain is Cyclic pyranopterin monophosphate synthase from Pseudomonas putida (strain GB-1).